The sequence spans 329 residues: Protein mlo2 (329 aa).

Residues 33-104 (DTCTYSMGYL…HSIPCNLRKS (72 aa)) form a UBR-type zinc finger. The segment at 120–179 (GRFCICDTVYNPETEEGTMFQCILCEDWFHEKCLQKTNKGIAIPDAETFEWLVCSECSEK) adopts a PHD-type zinc-finger fold.

Belongs to the UBR7 family.

Its function is as follows. Not known, interfere with mitotic chromosome segregation when overexpressed. The polypeptide is Protein mlo2 (mlo2) (Schizosaccharomyces pombe (strain 972 / ATCC 24843) (Fission yeast)).